The sequence spans 347 residues: NADH-ubiquinone oxidoreductase chain 2 (347 aa).

10 helical membrane-spanning segments follow: residues 4 to 21 (LILSMIMATIILGTLIVM), 26 to 45 (WLMVWIGFEMNMLAILPVLM), 59 to 79 (YFLTQATASMLLMLAITINLI), 96 to 116 (IIMTLALAMKLGLSPFHFWVP), 122 to 142 (IQLSSGLILLTWQKLAPMSIL), 148 to 168 (AINMDLLLSMSLMSVAIGGWG), 201 to 221 (ALLNLIIYILLTTTTFMTFML), 242 to 262 (TTILILMLSLGGLPPLSGFLP), 274 to 294 (DSIITPTIMAITALLNLYFYM), and 326 to 346 (LPPLIVLSTLILPMSPMLMLL).

It belongs to the complex I subunit 2 family. In terms of assembly, core subunit of respiratory chain NADH dehydrogenase (Complex I) which is composed of 45 different subunits. Interacts with TMEM242.

It is found in the mitochondrion inner membrane. The catalysed reaction is a ubiquinone + NADH + 5 H(+)(in) = a ubiquinol + NAD(+) + 4 H(+)(out). Functionally, core subunit of the mitochondrial membrane respiratory chain NADH dehydrogenase (Complex I) which catalyzes electron transfer from NADH through the respiratory chain, using ubiquinone as an electron acceptor. Essential for the catalytic activity and assembly of complex I. This Syconycteris australis (Southern blossom bat) protein is NADH-ubiquinone oxidoreductase chain 2.